Here is a 612-residue protein sequence, read N- to C-terminus: UvrABC system protein C (612 aa).

Residues 18 to 96 (TRPGVYRMMD…IKTLKPPYNI (79 aa)) form the GIY-YIG domain. Residues 208–243 (PEIINETIQQMEVASAQLDFERAAVLRDQVDYLRRV) enclose the UVR domain.

Belongs to the UvrC family. Interacts with UvrB in an incision complex.

It is found in the cytoplasm. The UvrABC repair system catalyzes the recognition and processing of DNA lesions. UvrC both incises the 5' and 3' sides of the lesion. The N-terminal half is responsible for the 3' incision and the C-terminal half is responsible for the 5' incision. In Hahella chejuensis (strain KCTC 2396), this protein is UvrABC system protein C.